Here is a 176-residue protein sequence, read N- to C-terminus: Translation initiation factor IF-3 (176 aa).

It belongs to the IF-3 family. As to quaternary structure, monomer.

Its subcellular location is the cytoplasm. IF-3 binds to the 30S ribosomal subunit and shifts the equilibrium between 70S ribosomes and their 50S and 30S subunits in favor of the free subunits, thus enhancing the availability of 30S subunits on which protein synthesis initiation begins. This Nitratidesulfovibrio vulgaris (strain DSM 19637 / Miyazaki F) (Desulfovibrio vulgaris) protein is Translation initiation factor IF-3.